The chain runs to 482 residues: tRNA sulfurtransferase (482 aa).

A THUMP domain is found at 61-165 (DLVRDALTRI…DDRLLLVRGR (105 aa)). ATP-binding positions include 183–184 (LI), Lys265, Gly287, and Gln296. Cys344 and Cys456 are oxidised to a cystine. The Rhodanese domain occupies 404–482 (LAEGDVVLDI…GYDNVRVYRP (79 aa)). Cys456 serves as the catalytic Cysteine persulfide intermediate.

It belongs to the ThiI family.

The protein localises to the cytoplasm. It catalyses the reaction [ThiI sulfur-carrier protein]-S-sulfanyl-L-cysteine + a uridine in tRNA + 2 reduced [2Fe-2S]-[ferredoxin] + ATP + H(+) = [ThiI sulfur-carrier protein]-L-cysteine + a 4-thiouridine in tRNA + 2 oxidized [2Fe-2S]-[ferredoxin] + AMP + diphosphate. The catalysed reaction is [ThiS sulfur-carrier protein]-C-terminal Gly-Gly-AMP + S-sulfanyl-L-cysteinyl-[cysteine desulfurase] + AH2 = [ThiS sulfur-carrier protein]-C-terminal-Gly-aminoethanethioate + L-cysteinyl-[cysteine desulfurase] + A + AMP + 2 H(+). Its pathway is cofactor biosynthesis; thiamine diphosphate biosynthesis. Functionally, catalyzes the ATP-dependent transfer of a sulfur to tRNA to produce 4-thiouridine in position 8 of tRNAs, which functions as a near-UV photosensor. Also catalyzes the transfer of sulfur to the sulfur carrier protein ThiS, forming ThiS-thiocarboxylate. This is a step in the synthesis of thiazole, in the thiamine biosynthesis pathway. The sulfur is donated as persulfide by IscS. This is tRNA sulfurtransferase from Edwardsiella ictaluri (strain 93-146).